The primary structure comprises 229 residues: Protein AF_2251 (229 aa).

The protein belongs to the CinA family.

The chain is Protein AF_2251 from Archaeoglobus fulgidus (strain ATCC 49558 / DSM 4304 / JCM 9628 / NBRC 100126 / VC-16).